Reading from the N-terminus, the 333-residue chain is GTPase Obg (333 aa).

The region spanning 1–159 (MKFIDEATIT…ATVRLELKLL (159 aa)) is the Obg domain. Residues 63-85 (KQFAAPNGAPGEGRQKTGKSGDD) are disordered. Residues 75–84 (GRQKTGKSGD) show a composition bias toward basic and acidic residues. The 170-residue stretch at 160 to 329 (ADVGLIGLPN…LKKHLFELLC (170 aa)) folds into the OBG-type G domain. GTP is bound by residues 166-173 (GLPNAGKS), 191-195 (FTTLS), 213-216 (DIPG), 283-286 (NKMD), and 310-312 (SAA). 2 residues coordinate Mg(2+): serine 173 and threonine 193.

Belongs to the TRAFAC class OBG-HflX-like GTPase superfamily. OBG GTPase family. As to quaternary structure, monomer. The cofactor is Mg(2+).

The protein resides in the cytoplasm. Functionally, an essential GTPase which binds GTP, GDP and possibly (p)ppGpp with moderate affinity, with high nucleotide exchange rates and a fairly low GTP hydrolysis rate. Plays a role in control of the cell cycle, stress response, ribosome biogenesis and in those bacteria that undergo differentiation, in morphogenesis control. In Desulfosudis oleivorans (strain DSM 6200 / JCM 39069 / Hxd3) (Desulfococcus oleovorans), this protein is GTPase Obg.